We begin with the raw amino-acid sequence, 61 residues long: Large ribosomal subunit protein bL28 (61 aa).

Residues 1-26 (MAKDFVTGKHTRFGNTRSHALNHSRR) form a disordered region.

This sequence belongs to the bacterial ribosomal protein bL28 family.

In Pediococcus pentosaceus (strain ATCC 25745 / CCUG 21536 / LMG 10740 / 183-1w), this protein is Large ribosomal subunit protein bL28.